Here is a 74-residue protein sequence, read N- to C-terminus: DNA gyrase inhibitor YacG (74 aa).

Zn(2+) is bound by residues Cys7, Cys10, Cys26, and Cys30.

It belongs to the DNA gyrase inhibitor YacG family. Interacts with GyrB. It depends on Zn(2+) as a cofactor.

Its function is as follows. Inhibits all the catalytic activities of DNA gyrase by preventing its interaction with DNA. Acts by binding directly to the C-terminal domain of GyrB, which probably disrupts DNA binding by the gyrase. This Shewanella denitrificans (strain OS217 / ATCC BAA-1090 / DSM 15013) protein is DNA gyrase inhibitor YacG.